The chain runs to 225 residues: NAD(P)H-quinone oxidoreductase subunit K, chloroplastic (225 aa).

C43, C44, C108, and C139 together coordinate [4Fe-4S] cluster.

This sequence belongs to the complex I 20 kDa subunit family. In terms of assembly, NDH is composed of at least 16 different subunits, 5 of which are encoded in the nucleus. Requires [4Fe-4S] cluster as cofactor.

It is found in the plastid. The protein resides in the chloroplast thylakoid membrane. It catalyses the reaction a plastoquinone + NADH + (n+1) H(+)(in) = a plastoquinol + NAD(+) + n H(+)(out). The catalysed reaction is a plastoquinone + NADPH + (n+1) H(+)(in) = a plastoquinol + NADP(+) + n H(+)(out). NDH shuttles electrons from NAD(P)H:plastoquinone, via FMN and iron-sulfur (Fe-S) centers, to quinones in the photosynthetic chain and possibly in a chloroplast respiratory chain. The immediate electron acceptor for the enzyme in this species is believed to be plastoquinone. Couples the redox reaction to proton translocation, and thus conserves the redox energy in a proton gradient. This is NAD(P)H-quinone oxidoreductase subunit K, chloroplastic from Lepidium virginicum (Virginia pepperweed).